A 206-amino-acid polypeptide reads, in one-letter code: Dephospho-CoA kinase (206 aa).

One can recognise a DPCK domain in the interval 4–200 (TVALTGGIGS…ASYLKLASQF (197 aa)). Residue 12–17 (GSGKST) coordinates ATP.

The protein belongs to the CoaE family.

The protein localises to the cytoplasm. It carries out the reaction 3'-dephospho-CoA + ATP = ADP + CoA + H(+). It functions in the pathway cofactor biosynthesis; coenzyme A biosynthesis; CoA from (R)-pantothenate: step 5/5. In terms of biological role, catalyzes the phosphorylation of the 3'-hydroxyl group of dephosphocoenzyme A to form coenzyme A. In Salmonella choleraesuis (strain SC-B67), this protein is Dephospho-CoA kinase.